The sequence spans 159 residues: uncharacterized protein (159 aa).

Disordered regions lie at residues 1 to 29 (MHQTHAIQRLEVLPSFSNESPTSRETSES) and 114 to 159 (TRGG…NENT). Positions 15 to 29 (SFSNESPTSRETSES) are enriched in polar residues.

This is an uncharacterized protein from Homo sapiens (Human).